The sequence spans 129 residues: Natriuretic peptides B (129 aa).

Positions 1–26 are cleaved as a signal peptide; the sequence is MDPQKALSRTLLLLLFLHLSLLGCRS. Cys-107 and Cys-123 are oxidised to a cystine.

This sequence belongs to the natriuretic peptide family. In terms of processing, the precursor molecule is proteolytically cleaved, possibly by FURIN or CORIN, to produce the active peptide. May undergo further proteolytic cleavage by various proteases such as DPP4, MME and possibly FAP, to give rise to a variety of shorter peptides. May be cleaved at Pro-99 by the prolyl endopeptidase FAP (seprase) activity (in vitro). May be degraded by IDE. During IDE degradation, the resulting products initially increase the activation of NPR1 and can also stimulate NPR2 to produce cGMP before the fragments are completely degraded and inactivated by IDE (in vitro).

It localises to the secreted. Functionally, cardiac hormone that plays a key role in mediating cardio-renal homeostasis. May also function as a paracrine antifibrotic factor in the heart. Acts by specifically binding and stimulating NPR1 to produce cGMP, which in turn activates effector proteins that drive various biological responses. Involved in regulating the extracellular fluid volume and maintaining the fluid-electrolyte balance through natriuresis, diuresis, vasorelaxation, and inhibition of renin and aldosterone secretion. Binds the clearance receptor NPR3. In Ovis aries (Sheep), this protein is Natriuretic peptides B (NPPB).